Consider the following 346-residue polypeptide: MTDHTQQFASDNYSGICPEAWAAMAEANRGHERAYGDDQWTARASDYFRQLFETDCEVFFAFNGTAANSLALAALCQSYHSVICSETAHVETDECGAPEFFSNGSKLLLAQTEVGKLTPASIRDIALKRQDIHYPKPRVVTLTQATEVGTVYRPDELKAISATCKELGLHLHMDGARFSNACAFLGCSPAELSWKAGVDVLCFGGTKNGMAVGEAILFFNRDLAEDFDYRCKQAGQLASKMRFLAAPWVGVLQDDAWLRYADHANRCARLLAELVADVPGVSLMFPVEANGVFLQLSEPAIEALRARGWRFYTFIGEGGARFMCSWDTDIERVRELARDIRLVMGA.

Lysine 207 is modified (N6-(pyridoxal phosphate)lysine).

The protein belongs to the threonine aldolase family. As to quaternary structure, homotetramer. The cofactor is pyridoxal 5'-phosphate.

The catalysed reaction is L-threonine = acetaldehyde + glycine. It catalyses the reaction L-allo-threonine = acetaldehyde + glycine. Catalyzes the cleavage of L-allo-threonine and L-threonine to glycine and acetaldehyde. The protein is Low specificity L-threonine aldolase (ltaE) of Pseudomonas aeruginosa (strain ATCC 15692 / DSM 22644 / CIP 104116 / JCM 14847 / LMG 12228 / 1C / PRS 101 / PAO1).